The following is a 306-amino-acid chain: 3-methyl-2-oxobutanoate hydroxymethyltransferase (306 aa).

Residues aspartate 53 and aspartate 96 each coordinate Mg(2+). 3-methyl-2-oxobutanoate-binding positions include aspartate 53–serine 54, aspartate 96, and lysine 126. Glutamate 128 provides a ligand contact to Mg(2+). Glutamate 195 functions as the Proton acceptor in the catalytic mechanism.

Belongs to the PanB family. Homodecamer; pentamer of dimers. Requires Mg(2+) as cofactor.

It localises to the cytoplasm. The catalysed reaction is 3-methyl-2-oxobutanoate + (6R)-5,10-methylene-5,6,7,8-tetrahydrofolate + H2O = 2-dehydropantoate + (6S)-5,6,7,8-tetrahydrofolate. Its pathway is cofactor biosynthesis; (R)-pantothenate biosynthesis; (R)-pantoate from 3-methyl-2-oxobutanoate: step 1/2. Catalyzes the reversible reaction in which hydroxymethyl group from 5,10-methylenetetrahydrofolate is transferred onto alpha-ketoisovalerate to form ketopantoate. This is 3-methyl-2-oxobutanoate hydroxymethyltransferase from Anaeromyxobacter dehalogenans (strain 2CP-1 / ATCC BAA-258).